The following is a 412-amino-acid chain: Putative competence-damage inducible protein (412 aa).

The protein belongs to the CinA family.

This Clostridium perfringens (strain ATCC 13124 / DSM 756 / JCM 1290 / NCIMB 6125 / NCTC 8237 / Type A) protein is Putative competence-damage inducible protein.